The chain runs to 315 residues: Homoserine kinase (315 aa).

Position 97–107 (97–107) interacts with ATP; sequence PPARGLGSSAT.

It belongs to the GHMP kinase family. Homoserine kinase subfamily.

It is found in the cytoplasm. It carries out the reaction L-homoserine + ATP = O-phospho-L-homoserine + ADP + H(+). It functions in the pathway amino-acid biosynthesis; L-threonine biosynthesis; L-threonine from L-aspartate: step 4/5. Its function is as follows. Catalyzes the ATP-dependent phosphorylation of L-homoserine to L-homoserine phosphate. The polypeptide is Homoserine kinase (Prochlorococcus marinus subsp. pastoris (strain CCMP1986 / NIES-2087 / MED4)).